The sequence spans 183 residues: Ribosome maturation factor RimM (183 aa).

A PRC barrel domain is found at 95–171; that stretch reads DPDEFYDHEL…VVVIDPPEGL (77 aa).

The protein belongs to the RimM family. Binds ribosomal protein uS19.

It localises to the cytoplasm. An accessory protein needed during the final step in the assembly of 30S ribosomal subunit, possibly for assembly of the head region. Essential for efficient processing of 16S rRNA. May be needed both before and after RbfA during the maturation of 16S rRNA. It has affinity for free ribosomal 30S subunits but not for 70S ribosomes. This chain is Ribosome maturation factor RimM, found in Rhodococcus opacus (strain B4).